The sequence spans 223 residues: ATP phosphoribosyltransferase (223 aa).

This sequence belongs to the ATP phosphoribosyltransferase family. Short subfamily. In terms of assembly, heteromultimer composed of HisG and HisZ subunits.

The protein localises to the cytoplasm. The enzyme catalyses 1-(5-phospho-beta-D-ribosyl)-ATP + diphosphate = 5-phospho-alpha-D-ribose 1-diphosphate + ATP. It functions in the pathway amino-acid biosynthesis; L-histidine biosynthesis; L-histidine from 5-phospho-alpha-D-ribose 1-diphosphate: step 1/9. Its function is as follows. Catalyzes the condensation of ATP and 5-phosphoribose 1-diphosphate to form N'-(5'-phosphoribosyl)-ATP (PR-ATP). Has a crucial role in the pathway because the rate of histidine biosynthesis seems to be controlled primarily by regulation of HisG enzymatic activity. This is ATP phosphoribosyltransferase from Novosphingobium aromaticivorans (strain ATCC 700278 / DSM 12444 / CCUG 56034 / CIP 105152 / NBRC 16084 / F199).